Consider the following 406-residue polypeptide: Glucose-1-phosphate adenylyltransferase (406 aa).

Alpha-D-glucose 1-phosphate-binding positions include Y100, G165, E181–K182, and S199.

It belongs to the bacterial/plant glucose-1-phosphate adenylyltransferase family. In terms of assembly, homotetramer.

The catalysed reaction is alpha-D-glucose 1-phosphate + ATP + H(+) = ADP-alpha-D-glucose + diphosphate. Its pathway is glycan biosynthesis; glycogen biosynthesis. Involved in the biosynthesis of ADP-glucose, a building block required for the elongation reactions to produce glycogen. Catalyzes the reaction between ATP and alpha-D-glucose 1-phosphate (G1P) to produce pyrophosphate and ADP-Glc. The protein is Glucose-1-phosphate adenylyltransferase of Streptomyces avermitilis (strain ATCC 31267 / DSM 46492 / JCM 5070 / NBRC 14893 / NCIMB 12804 / NRRL 8165 / MA-4680).